A 265-amino-acid chain; its full sequence is Thymidine kinase 2, mitochondrial (265 aa).

The transit peptide at 1–33 directs the protein to the mitochondrion; it reads MLLWPLRGWAARALRCFGPGSRGSPASGPGPRR. Residues 20-32 show a composition bias toward low complexity; sequence GSRGSPASGPGPR. The disordered stretch occupies residues 20–47; that stretch reads GSRGSPASGPGPRRVQRRAWPPDKEQEK. 57-65 contacts ATP; sequence GNIASGKTT. Residue glutamate 133 is the Proton acceptor of the active site.

Belongs to the DCK/DGK family. Monomer. In terms of tissue distribution, predominantly expressed in liver, pancreas, muscle, and brain.

The protein resides in the mitochondrion. It carries out the reaction thymidine + ATP = dTMP + ADP + H(+). The catalysed reaction is 2'-deoxycytidine + ATP = dCMP + ADP + H(+). The enzyme catalyses 2'-deoxyuridine + ATP = dUMP + ADP + H(+). In terms of biological role, phosphorylates thymidine, deoxycytidine, and deoxyuridine in the mitochondrial matrix. In non-replicating cells, where cytosolic dNTP synthesis is down-regulated, mtDNA synthesis depends solely on TK2 and DGUOK. Widely used as target of antiviral and chemotherapeutic agents. The sequence is that of Thymidine kinase 2, mitochondrial from Homo sapiens (Human).